Reading from the N-terminus, the 276-residue chain is Hydroxyethylthiazole kinase (276 aa).

Residues Arg126 and Ser172 each coordinate ATP. Residue Gly199 participates in substrate binding.

This sequence belongs to the Thz kinase family. It depends on Mg(2+) as a cofactor.

The catalysed reaction is 5-(2-hydroxyethyl)-4-methylthiazole + ATP = 4-methyl-5-(2-phosphooxyethyl)-thiazole + ADP + H(+). It participates in cofactor biosynthesis; thiamine diphosphate biosynthesis; 4-methyl-5-(2-phosphoethyl)-thiazole from 5-(2-hydroxyethyl)-4-methylthiazole: step 1/1. Its function is as follows. Catalyzes the phosphorylation of the hydroxyl group of 4-methyl-5-beta-hydroxyethylthiazole (THZ). The sequence is that of Hydroxyethylthiazole kinase from Burkholderia pseudomallei (strain 1710b).